The primary structure comprises 342 residues: Porphobilinogen deaminase (342 aa).

An S-(dipyrrolylmethanemethyl)cysteine modification is found at Cys249. The interval 323–342 is disordered; it reads AAAKQGAAEDGAADSAATGE.

Belongs to the HMBS family. As to quaternary structure, monomer. Requires dipyrromethane as cofactor.

It catalyses the reaction 4 porphobilinogen + H2O = hydroxymethylbilane + 4 NH4(+). It participates in porphyrin-containing compound metabolism; protoporphyrin-IX biosynthesis; coproporphyrinogen-III from 5-aminolevulinate: step 2/4. Its function is as follows. Tetrapolymerization of the monopyrrole PBG into the hydroxymethylbilane pre-uroporphyrinogen in several discrete steps. In Paraburkholderia phytofirmans (strain DSM 17436 / LMG 22146 / PsJN) (Burkholderia phytofirmans), this protein is Porphobilinogen deaminase.